The chain runs to 589 residues: DNA ligase (589 aa).

E250 contributes to the ATP binding site. Residue K252 is the N6-AMP-lysine intermediate of the active site. ATP contacts are provided by R257, R272, E302, F342, R417, and K423.

This sequence belongs to the ATP-dependent DNA ligase family. Requires Mg(2+) as cofactor.

It catalyses the reaction ATP + (deoxyribonucleotide)n-3'-hydroxyl + 5'-phospho-(deoxyribonucleotide)m = (deoxyribonucleotide)n+m + AMP + diphosphate.. In terms of biological role, DNA ligase that seals nicks in double-stranded DNA during DNA replication, DNA recombination and DNA repair. In Cenarchaeum symbiosum (strain A), this protein is DNA ligase.